We begin with the raw amino-acid sequence, 258 residues long: Triosephosphate isomerase (258 aa).

11–13 (NWK) contributes to the substrate binding site. His-101 (electrophile) is an active-site residue. Glu-173 serves as the catalytic Proton acceptor. Residues Gly-179, Ser-219, and 240 to 241 (GG) each bind substrate.

It belongs to the triosephosphate isomerase family. Homodimer.

It is found in the cytoplasm. It catalyses the reaction D-glyceraldehyde 3-phosphate = dihydroxyacetone phosphate. The protein operates within carbohydrate biosynthesis; gluconeogenesis. Its pathway is carbohydrate degradation; glycolysis; D-glyceraldehyde 3-phosphate from glycerone phosphate: step 1/1. Involved in the gluconeogenesis. Catalyzes stereospecifically the conversion of dihydroxyacetone phosphate (DHAP) to D-glyceraldehyde-3-phosphate (G3P). The chain is Triosephosphate isomerase from Streptomyces avermitilis (strain ATCC 31267 / DSM 46492 / JCM 5070 / NBRC 14893 / NCIMB 12804 / NRRL 8165 / MA-4680).